Reading from the N-terminus, the 307-residue chain is Glycine--tRNA ligase alpha subunit (307 aa).

The protein belongs to the class-II aminoacyl-tRNA synthetase family. In terms of assembly, tetramer of two alpha and two beta subunits.

Its subcellular location is the cytoplasm. It carries out the reaction tRNA(Gly) + glycine + ATP = glycyl-tRNA(Gly) + AMP + diphosphate. In Aeromonas hydrophila subsp. hydrophila (strain ATCC 7966 / DSM 30187 / BCRC 13018 / CCUG 14551 / JCM 1027 / KCTC 2358 / NCIMB 9240 / NCTC 8049), this protein is Glycine--tRNA ligase alpha subunit.